The following is a 570-amino-acid chain: Proline--tRNA ligase (570 aa).

Belongs to the class-II aminoacyl-tRNA synthetase family. ProS type 1 subfamily. Homodimer.

Its subcellular location is the cytoplasm. The catalysed reaction is tRNA(Pro) + L-proline + ATP = L-prolyl-tRNA(Pro) + AMP + diphosphate. In terms of biological role, catalyzes the attachment of proline to tRNA(Pro) in a two-step reaction: proline is first activated by ATP to form Pro-AMP and then transferred to the acceptor end of tRNA(Pro). As ProRS can inadvertently accommodate and process non-cognate amino acids such as alanine and cysteine, to avoid such errors it has two additional distinct editing activities against alanine. One activity is designated as 'pretransfer' editing and involves the tRNA(Pro)-independent hydrolysis of activated Ala-AMP. The other activity is designated 'posttransfer' editing and involves deacylation of mischarged Ala-tRNA(Pro). The misacylated Cys-tRNA(Pro) is not edited by ProRS. The protein is Proline--tRNA ligase of Neisseria gonorrhoeae (strain ATCC 700825 / FA 1090).